A 151-amino-acid chain; its full sequence is Ubiquitin-conjugating enzyme E2 W (151 aa).

M1 participates in a covalent cross-link: Peptide (Met-Gly) (interchain with G-Cter in ubiquitin). In terms of domain architecture, UBC core spans 3 to 151; sequence SMQKRLQKEL…TKWWYHDDTC (149 aa). Residue C91 is the Glycyl thioester intermediate of the active site.

Belongs to the ubiquitin-conjugating enzyme family. As to quaternary structure, homodimer. Interacts with FANCL. Interacts with STUB1/CHIP. Ubiquitinated in vitro in the presence of FANCL. Autoubiquitinated at Met-1.

The protein localises to the nucleus. The enzyme catalyses S-ubiquitinyl-[E1 ubiquitin-activating enzyme]-L-cysteine + [E2 ubiquitin-conjugating enzyme]-L-cysteine = [E1 ubiquitin-activating enzyme]-L-cysteine + S-ubiquitinyl-[E2 ubiquitin-conjugating enzyme]-L-cysteine.. It catalyses the reaction S-ubiquitinyl-[E1 ubiquitin-activating enzyme]-L-cysteine + [acceptor protein]-N-terminal-amino acid = [E1 ubiquitin-activating enzyme]-L-cysteine + N-terminal-ubiquitinyl-[acceptor protein].. It participates in protein modification; protein ubiquitination. Accepts ubiquitin from the E1 complex and catalyzes its covalent attachment to other proteins. Specifically monoubiquitinates the N-terminus of various substrates, including ATXN3, MAPT/TAU, POLR2H/RPB8 and STUB1/CHIP, by recognizing backbone atoms of disordered N-termini. Involved in degradation of misfolded chaperone substrates by mediating monoubiquitination of STUB1/CHIP, leading to recruitment of ATXN3 to monoubiquitinated STUB1/CHIP, and restriction of the length of ubiquitin chain attached to STUB1/CHIP substrates by ATXN3. After UV irradiation, but not after mitomycin-C (MMC) treatment, acts as a specific E2 ubiquitin-conjugating enzyme for the Fanconi anemia complex by associating with E3 ubiquitin-protein ligase FANCL and catalyzing monoubiquitination of FANCD2, a key step in the DNA damage pathway. In vitro catalyzes 'Lys-11'-linked polyubiquitination. UBE2W-catalyzed ubiquitination also occurs in the presence of inactive RING/U-box type E3s, i.e. lacking the active site cysteine residues to form thioester bonds with ubiquitin, or even in the absence of E3, albeit at a slower rate. In Bos taurus (Bovine), this protein is Ubiquitin-conjugating enzyme E2 W (UBE2W).